The following is a 297-amino-acid chain: tRNA pseudouridine synthase B (297 aa).

Residue aspartate 39 is the Nucleophile of the active site.

The protein belongs to the pseudouridine synthase TruB family. Type 1 subfamily.

The enzyme catalyses uridine(55) in tRNA = pseudouridine(55) in tRNA. Responsible for synthesis of pseudouridine from uracil-55 in the psi GC loop of transfer RNAs. The protein is tRNA pseudouridine synthase B of Lactobacillus johnsonii (strain CNCM I-12250 / La1 / NCC 533).